Here is a 1347-residue protein sequence, read N- to C-terminus: Protein HUA2-LIKE 3 (1347 aa).

A PWWP domain is found at 24 to 81; it reads VGDLVLAKVKGFPAWPAVVDEPEKWGHSADSKKVTVHFFGTQQIAFCNHGDVESFTEE. Disordered regions lie at residues 110–137, 251–320, and 383–402; these read KLKQ…TSQL, DGGP…SGSK, and DSCQ…PCEE. A compositionally biased stretch (polar residues) spans 127–137; the sequence is TAGSSGNTSQL. Over residues 302 to 314 the composition is skewed to low complexity; it reads VESNNNSRNEGNG. The span at 390-402 shows a compositional bias: basic and acidic residues; it reads NSHERLNERPCEE. Positions 845–986 constitute a CID domain; that stretch reads DVQCTVESFE…HHIRELDSLS (142 aa). 4 disordered regions span residues 1037–1069, 1121–1140, 1147–1223, and 1259–1347; these read RDED…VTPS, TSHQ…QNAQ, YSNG…YSYM, and RMRP…WHQR. Residues 1038 to 1049 are compositionally biased toward acidic residues; it reads DEDEGSDSDGGD. Positions 1054–1069 are enriched in basic and acidic residues; sequence TPEHESRSLEEHVTPS. Positions 1181-1191 are enriched in polar residues; the sequence is PSYSSRVSLSK. Pro residues predominate over residues 1208–1217; the sequence is SSHPPPPPPS. Residues 1259-1272 are compositionally biased toward basic and acidic residues; the sequence is RMRPEPCENRDNWR.

As to expression, expressed throughout young primordia, and vegetative and reproductive apices.

The protein resides in the nucleus. Its function is as follows. Probable transcription factor that acts with partial redundancy with HULK1 and HULK2. Plays diverse and essential roles in the control of plant development, physiology and flowering time. This chain is Protein HUA2-LIKE 3, found in Arabidopsis thaliana (Mouse-ear cress).